A 209-amino-acid polypeptide reads, in one-letter code: Urease accessory protein UreG (209 aa).

Residue 16 to 23 (GPVGSGKT) coordinates GTP.

It belongs to the SIMIBI class G3E GTPase family. UreG subfamily. In terms of assembly, homodimer. UreD, UreF and UreG form a complex that acts as a GTP-hydrolysis-dependent molecular chaperone, activating the urease apoprotein by helping to assemble the nickel containing metallocenter of UreC. The UreE protein probably delivers the nickel.

The protein resides in the cytoplasm. Its function is as follows. Facilitates the functional incorporation of the urease nickel metallocenter. This process requires GTP hydrolysis, probably effectuated by UreG. In Blochmanniella floridana, this protein is Urease accessory protein UreG.